The sequence spans 155 residues: Interleukin-2 (155 aa).

The signal sequence occupies residues 1-20 (MYRMQLLSCIALTLALVANG). Threonine 23 is a glycosylation site (O-linked (GalNAc...) threonine). Cysteine 79 and cysteine 127 are oxidised to a cystine.

This sequence belongs to the IL-2 family.

It localises to the secreted. Functionally, cytokine produced by activated CD4-positive helper T-cells and to a lesser extend activated CD8-positive T-cells and natural killer (NK) cells that plays pivotal roles in the immune response and tolerance. Binds to a receptor complex composed of either the high-affinity trimeric IL-2R (IL2RA/CD25, IL2RB/CD122 and IL2RG/CD132) or the low-affinity dimeric IL-2R (IL2RB and IL2RG). Interaction with the receptor leads to oligomerization and conformation changes in the IL-2R subunits resulting in downstream signaling starting with phosphorylation of JAK1 and JAK3. In turn, JAK1 and JAK3 phosphorylate the receptor to form a docking site leading to the phosphorylation of several substrates including STAT5. This process leads to activation of several pathways including STAT, phosphoinositide-3-kinase/PI3K and mitogen-activated protein kinase/MAPK pathways. Functions as a T-cell growth factor and can increase NK-cell cytolytic activity as well. Promotes strong proliferation of activated B-cells and subsequently immunoglobulin production. Plays a pivotal role in regulating the adaptive immune system by controlling the survival and proliferation of regulatory T-cells, which are required for the maintenance of immune tolerance. Moreover, participates in the differentiation and homeostasis of effector T-cell subsets, including Th1, Th2, Th17 as well as memory CD8-positive T-cells. This chain is Interleukin-2 (IL2), found in Capra hircus (Goat).